The sequence spans 241 residues: Eukaryotic translation initiation factor 6 (241 aa).

It belongs to the eIF-6 family. In terms of assembly, monomer. Associates with the 60S ribosomal subunit.

It is found in the cytoplasm. The protein localises to the nucleus. Its subcellular location is the nucleolus. In terms of biological role, binds to the 60S ribosomal subunit and prevents its association with the 40S ribosomal subunit to form the 80S initiation complex in the cytoplasm. Is also involved in ribosome biogenesis. Associates with pre-60S subunits in the nucleus and is involved in its nuclear export. The sequence is that of Eukaryotic translation initiation factor 6 from Encephalitozoon cuniculi (strain GB-M1) (Microsporidian parasite).